A 362-amino-acid polypeptide reads, in one-letter code: L-arginine:L-lysine amidinotransferase (362 aa).

Residues Asp-195 and His-244 contribute to the active site. The Amidino-cysteine intermediate role is filled by Cys-346.

It belongs to the amidinotransferase family.

It carries out the reaction L-lysine + L-arginine = L-homoarginine + L-ornithine. The catalysed reaction is L-canavanine + L-ornithine = L-canaline + L-arginine + H(+). Functionally, involved in the biosynthesis of phaseolotoxin, a nonhost-specific toxin which is a key component in the development of the halo blight disease of beans. Catalyzes the transfer of an amidino group from arginine to lysine to produce one molecule of homoarginine and one molecule of ornithine, both being precursors in the biosynthesis of phaseolotoxin. Can also use L-canavanine as an alternative amidine donor with L-ornithine as amidine acceptor. This is L-arginine:L-lysine amidinotransferase from Pseudomonas savastanoi pv. phaseolicola (Pseudomonas syringae pv. phaseolicola).